The chain runs to 297 residues: Ribosomal RNA small subunit methyltransferase A (297 aa).

Residues Asn31, Leu33, Gly58, Glu79, Asp104, and Asn129 each contribute to the S-adenosyl-L-methionine site.

It belongs to the class I-like SAM-binding methyltransferase superfamily. rRNA adenine N(6)-methyltransferase family. RsmA subfamily.

Its subcellular location is the cytoplasm. It carries out the reaction adenosine(1518)/adenosine(1519) in 16S rRNA + 4 S-adenosyl-L-methionine = N(6)-dimethyladenosine(1518)/N(6)-dimethyladenosine(1519) in 16S rRNA + 4 S-adenosyl-L-homocysteine + 4 H(+). In terms of biological role, specifically dimethylates two adjacent adenosines (A1518 and A1519) in the loop of a conserved hairpin near the 3'-end of 16S rRNA in the 30S particle. May play a critical role in biogenesis of 30S subunits. The sequence is that of Ribosomal RNA small subunit methyltransferase A from Pediococcus pentosaceus (strain ATCC 25745 / CCUG 21536 / LMG 10740 / 183-1w).